Consider the following 152-residue polypeptide: Transcriptional repressor NrdR (152 aa).

A zinc finger lies at 3–34 (CPFCSTEETKVIDSRLVSEGYQVRRRRECTNC). The 91-residue stretch at 49–139 (PKIVKTDGYR…VYLSFENINE (91 aa)) folds into the ATP-cone domain.

The protein belongs to the NrdR family. It depends on Zn(2+) as a cofactor.

Negatively regulates transcription of bacterial ribonucleotide reductase nrd genes and operons by binding to NrdR-boxes. The protein is Transcriptional repressor NrdR of Actinobacillus succinogenes (strain ATCC 55618 / DSM 22257 / CCUG 43843 / 130Z).